A 255-amino-acid chain; its full sequence is NAD kinase (255 aa).

The Proton acceptor role is filled by aspartate 44. NAD(+) is bound by residues 44–45 (DG), 114–115 (NE), aspartate 144, alanine 152, and 155–160 (TAYNLS).

The protein belongs to the NAD kinase family. Requires a divalent metal cation as cofactor.

The protein localises to the cytoplasm. It catalyses the reaction NAD(+) + ATP = ADP + NADP(+) + H(+). In terms of biological role, involved in the regulation of the intracellular balance of NAD and NADP, and is a key enzyme in the biosynthesis of NADP. Catalyzes specifically the phosphorylation on 2'-hydroxyl of the adenosine moiety of NAD to yield NADP. The protein is NAD kinase of Hyphomonas neptunium (strain ATCC 15444).